A 518-amino-acid chain; its full sequence is Crotonobetaine/carnitine--CoA ligase (518 aa).

The protein belongs to the ATP-dependent AMP-binding enzyme family.

It catalyses the reaction 4-(trimethylamino)butanoate + ATP + CoA = 4-(trimethylamino)butanoyl-CoA + AMP + diphosphate. It carries out the reaction crotonobetaine + ATP + CoA = crotonobetainyl-CoA + AMP + diphosphate. The enzyme catalyses (R)-carnitine + ATP + CoA = (R)-carnitinyl-CoA + AMP + diphosphate. It participates in amine and polyamine metabolism; carnitine metabolism. Functionally, catalyzes the transfer of CoA to carnitine, generating the initial carnitinyl-CoA needed for the CaiB reaction cycle. Also has activity toward crotonobetaine and gamma-butyrobetaine. The sequence is that of Crotonobetaine/carnitine--CoA ligase from Proteus mirabilis (strain HI4320).